Consider the following 290-residue polypeptide: Porphobilinogen deaminase (290 aa).

C238 is subject to S-(dipyrrolylmethanemethyl)cysteine.

Belongs to the HMBS family. As to quaternary structure, monomer. Dipyrromethane is required as a cofactor.

It carries out the reaction 4 porphobilinogen + H2O = hydroxymethylbilane + 4 NH4(+). It functions in the pathway porphyrin-containing compound metabolism; protoporphyrin-IX biosynthesis; coproporphyrinogen-III from 5-aminolevulinate: step 2/4. Tetrapolymerization of the monopyrrole PBG into the hydroxymethylbilane pre-uroporphyrinogen in several discrete steps. The chain is Porphobilinogen deaminase from Clostridium botulinum (strain Eklund 17B / Type B).